The chain runs to 467 residues: Chlorophenol O-methyltransferase (467 aa).

The disordered stretch occupies residues 1-41 (MAELRAPSSLSTERNGSASNTDVDKQKLNHLYQNGNKKTGS). 2 stretches are compositionally biased toward polar residues: residues 8–21 (SSLS…ASNT) and 31–41 (LYQNGNKKTGS). Aspartate 320 serves as a coordination point for S-adenosyl-L-methionine. Residue histidine 368 is the Proton acceptor of the active site.

The protein belongs to the class I-like SAM-binding methyltransferase superfamily. Cation-independent O-methyltransferase family.

The catalysed reaction is 2,4,6-trichlorophenol + S-adenosyl-L-methionine = 2,4,6-trichloroanisole + S-adenosyl-L-homocysteine. S-adenosyl-L-homocysteine acts as a competitive inhibitor. Also strongly inhibited by low concentrations of several metal ions, such as Cu(2+), Hg(2+), Zn(2+), and Ag(+), and to a lesser extent by p-chloromercuribenzoic acid, but it is not significantly affected by several thiols or other thiol reagents. Chlorophenol O-methyltransferase that methylates chlorophenols into chloroanisoles which are thought to be responsible for cork taint of wines. The only single chlorophenol (CP) methylated is 2-CP; neither 3-CP nor 4-CP are effective substrates. Within the dichlorophenols (DCPs), 2,4-DCP supports the highest rate of O-methylation, and the activity decreases in the following order: 2,3-DCP, 2,5-DCP, 2,6-DCP, and 3,4-DCP. Within the trichlorophenol (TCP) group, the maximal activity is observed with 2,3,4-TCP, whereas there is increasingly reduced activity with 2,4,5-TCP, 2,4,6-TCP, and 2,3,6-TCP. The only tetrachlorophenol (TeCP) that is methylated is 2,3,4,5-TeCP, since no activity can be detected with 2,3,4,6-TeCP and 2,3,5,6-TeCP. Is also able to methylate other halogenated phenols containing fluoro or bromo substituents, whereas other hydroxylated compounds, such as hydroxylated benzoic acids, hydroxybenzaldehydes, phenol, 2-metoxyphenol, and dihydroxybenzene, were not methylated. The polypeptide is Chlorophenol O-methyltransferase (Trichoderma longibrachiatum).